The following is a 134-amino-acid chain: Complexin-1 (134 aa).

A disordered region spans residues M1–E112. Residues D15–E81 show a composition bias toward basic and acidic residues. A coiled-coil region spans residues D29–K69. An interaction with the SNARE complex region spans residues R48 to Y70.

It belongs to the complexin/synaphin family. In terms of assembly, binds to the SNARE core complex containing SNAP25, VAMP2 and STX1A.

It localises to the cytoplasm. Its subcellular location is the cytosol. The protein localises to the perikaryon. The protein resides in the presynapse. Positively regulates a late step in synaptic vesicle exocytosis. Organizes the SNAREs into a cross-linked zigzag topology that, when interposed between the vesicle and plasma membranes, is incompatible with fusion, thereby preventing SNAREs from releasing neurotransmitters until an action potential arrives at the synapse. Also involved in glucose-induced secretion of insulin by pancreatic beta-cells. The sequence is that of Complexin-1 (CPLX1) from Bos taurus (Bovine).